The sequence spans 155 residues: IFN signaling evasion protein OPG029 (155 aa).

This sequence belongs to the orthopoxvirus OPG029 family. As to quaternary structure, interacts with host TANK, TBKBP1 and AZI2; these interactions prevent interferon production. Interacts with host STAT2.

Prevents establishment of cellular antiviral state by blocking virus-induced phosphorylation and activation of interferon regulatory factors 3/IRF3 and 7/IRF7, transcription factors critical for the induction of interferons alpha and beta. This blockage is produced through the inhibition of host TBK1, by binding host TBK1 adapter proteins TBKBP1 and AZI2, thereby producing a strong inhibition of the phosphorylation and activation of IRF3 and IRF7. Also acts as an inhibitor of the cellular response to type I IFN by interacting with host STAT2. Mechanistically, exerts its inhibitory effect after host ISGF3 complex (composed of STAT1, STAT2 and IRF9) binding to the interferon stimulated response element (ISRE). This Cynomys gunnisoni (Gunnison's prairie dog) protein is IFN signaling evasion protein OPG029 (OPG019).